An 84-amino-acid chain; its full sequence is Toxin CsE9 (84 aa).

The N-terminal stretch at 1–19 (MNSLLMITTCLILIGTVLA) is a signal peptide. In terms of domain architecture, LCN-type CS-alpha/beta spans 20–83 (EDGYLFDKRK…ISRTPGKTCK (64 aa)). 4 disulfides stabilise this stretch: Cys31/Cys82, Cys35/Cys58, Cys44/Cys63, and Cys48/Cys65.

This sequence belongs to the long (4 C-C) scorpion toxin superfamily. Sodium channel inhibitor family. Beta subfamily. Expressed by the venom gland.

The protein localises to the secreted. Functionally, beta toxins bind voltage-independently at site-4 of sodium channels (Nav) and shift the voltage of activation toward more negative potentials thereby affecting sodium channel activation and promoting spontaneous and repetitive firing. The chain is Toxin CsE9 from Centruroides sculpturatus (Arizona bark scorpion).